We begin with the raw amino-acid sequence, 151 residues long: UPF0735 ACT domain-containing protein SSP1116 (151 aa).

Residues 74–149 (TLILYVNDIV…HVSKVELISM (76 aa)) form the ACT domain.

This sequence belongs to the UPF0735 family.

The sequence is that of UPF0735 ACT domain-containing protein SSP1116 from Staphylococcus saprophyticus subsp. saprophyticus (strain ATCC 15305 / DSM 20229 / NCIMB 8711 / NCTC 7292 / S-41).